Consider the following 677-residue polypeptide: UvrABC system protein B (677 aa).

The region spanning 31 to 417 (DRIESGETDI…SDGVVEQIIR (387 aa)) is the Helicase ATP-binding domain. Residue 44-51 (GATGTGKS) coordinates ATP. Residues 97–120 (YYDYYQPEAYVPKTDTFIEKDASV) carry the Beta-hairpin motif. The 163-residue stretch at 434–596 (QIDDLLEEIR…VTPVPIKKTV (163 aa)) folds into the Helicase C-terminal domain. In terms of domain architecture, UVR spans 629–664 (KSHIKSLEAKMYMAAESLMFEEAAELRDEIQSLKEK).

It belongs to the UvrB family. Forms a heterotetramer with UvrA during the search for lesions. Interacts with UvrC in an incision complex.

It localises to the cytoplasm. The UvrABC repair system catalyzes the recognition and processing of DNA lesions. A damage recognition complex composed of 2 UvrA and 2 UvrB subunits scans DNA for abnormalities. Upon binding of the UvrA(2)B(2) complex to a putative damaged site, the DNA wraps around one UvrB monomer. DNA wrap is dependent on ATP binding by UvrB and probably causes local melting of the DNA helix, facilitating insertion of UvrB beta-hairpin between the DNA strands. Then UvrB probes one DNA strand for the presence of a lesion. If a lesion is found the UvrA subunits dissociate and the UvrB-DNA preincision complex is formed. This complex is subsequently bound by UvrC and the second UvrB is released. If no lesion is found, the DNA wraps around the other UvrB subunit that will check the other stand for damage. The chain is UvrABC system protein B from Tropheryma whipplei (strain TW08/27) (Whipple's bacillus).